Reading from the N-terminus, the 466-residue chain is Ribulose bisphosphate carboxylase large chain (466 aa).

K5 is modified (N6,N6,N6-trimethyllysine). Residues N114 and T164 each contribute to the substrate site. Catalysis depends on K166, which acts as the Proton acceptor. K168 contacts substrate. Positions 192, 194, and 195 each coordinate Mg(2+). Residue K192 is modified to N6-carboxylysine. Catalysis depends on H285, which acts as the Proton acceptor. Residues R286, H318, and S370 each coordinate substrate.

This sequence belongs to the RuBisCO large chain family. Type I subfamily. Heterohexadecamer of 8 large chains and 8 small chains; disulfide-linked. The disulfide link is formed within the large subunit homodimers. The cofactor is Mg(2+). In terms of processing, the disulfide bond which can form in the large chain dimeric partners within the hexadecamer appears to be associated with oxidative stress and protein turnover.

Its subcellular location is the plastid. It is found in the chloroplast. The catalysed reaction is 2 (2R)-3-phosphoglycerate + 2 H(+) = D-ribulose 1,5-bisphosphate + CO2 + H2O. It catalyses the reaction D-ribulose 1,5-bisphosphate + O2 = 2-phosphoglycolate + (2R)-3-phosphoglycerate + 2 H(+). In terms of biological role, ruBisCO catalyzes two reactions: the carboxylation of D-ribulose 1,5-bisphosphate, the primary event in carbon dioxide fixation, as well as the oxidative fragmentation of the pentose substrate in the photorespiration process. Both reactions occur simultaneously and in competition at the same active site. This is Ribulose bisphosphate carboxylase large chain from Cercidiphyllum japonicum (Katsura tree).